We begin with the raw amino-acid sequence, 154 residues long: 3-hydroxyacyl-[acyl-carrier-protein] dehydratase FabZ (154 aa).

His-60 is an active-site residue.

The protein belongs to the thioester dehydratase family. FabZ subfamily.

The protein localises to the cytoplasm. The catalysed reaction is a (3R)-hydroxyacyl-[ACP] = a (2E)-enoyl-[ACP] + H2O. Its function is as follows. Involved in unsaturated fatty acids biosynthesis. Catalyzes the dehydration of short chain beta-hydroxyacyl-ACPs and long chain saturated and unsaturated beta-hydroxyacyl-ACPs. The sequence is that of 3-hydroxyacyl-[acyl-carrier-protein] dehydratase FabZ from Synechococcus sp. (strain CC9311).